We begin with the raw amino-acid sequence, 185 residues long: Putative manganese efflux pump MntP (185 aa).

6 helical membrane passes run 3–23 (PFAVVLLAFSMSVDAFAVSVG), 41–61 (AVFGVVEAITPVIGWVAGVAA), 70–90 (HWLAFGLLAAVGLHMLYAAVW), 101–121 (SFTVLMATAIGTSLDAMAVGV), 123–143 (LAFLNVNIVVVATAIGLATFL), and 165–185 (AVAGIALFGLGLSILIEHLTA).

The protein belongs to the MntP (TC 9.B.29) family.

It localises to the cell inner membrane. Functionally, probably functions as a manganese efflux pump. The sequence is that of Putative manganese efflux pump MntP from Bradyrhizobium sp. (strain BTAi1 / ATCC BAA-1182).